The following is a 139-amino-acid chain: ATP synthase epsilon chain, chloroplastic (139 aa).

This sequence belongs to the ATPase epsilon chain family. In terms of assembly, F-type ATPases have 2 components, CF(1) - the catalytic core - and CF(0) - the membrane proton channel. CF(1) has five subunits: alpha(3), beta(3), gamma(1), delta(1), epsilon(1). CF(0) has three main subunits: a, b and c.

It is found in the plastid. It localises to the chloroplast thylakoid membrane. Functionally, produces ATP from ADP in the presence of a proton gradient across the membrane. In Dictyota dichotoma, this protein is ATP synthase epsilon chain, chloroplastic.